An 884-amino-acid chain; its full sequence is Protein P (884 aa).

A terminal protein domain (TP) region spans residues 1–184 (MHPFSRLFRN…GKPYSWEHRQ (184 aa)). Residues 185–387 (LVQHNGQQHK…YCIHHIVSSL (203 aa)) are spacer. Positions 299–345 (RNSGHTTWFSSASNSNKSRSREKAYSSNSTSKRYSPPLNYEKSDFSS) are disordered. Residues 388–729 (DDWGPCTVTG…YEELWPVVRQ (342 aa)) are polymerase/reverse transcriptase domain (RT). The Reverse transcriptase domain maps to 398 to 639 (DVTIKSPRTP…NHLHFMGYVI (242 aa)). Residues Asp470, Asp590, and Asp591 each contribute to the Mg(2+) site.

The protein belongs to the hepadnaviridae P protein family.

The catalysed reaction is DNA(n) + a 2'-deoxyribonucleoside 5'-triphosphate = DNA(n+1) + diphosphate. It carries out the reaction Endonucleolytic cleavage to 5'-phosphomonoester.. Activated by host HSP70 and HSP40 in vitro to be able to bind the epsilon loop of the pgRNA. Because deletion of the RNase H region renders the protein partly chaperone-independent, the chaperones may be needed indirectly to relieve occlusion of the RNA-binding site by this domain. Inhibited by several reverse-transcriptase inhibitors: Lamivudine, Adefovir and Entecavir. Multifunctional enzyme that converts the viral RNA genome into dsDNA in viral cytoplasmic capsids. This enzyme displays a DNA polymerase activity that can copy either DNA or RNA templates, and a ribonuclease H (RNase H) activity that cleaves the RNA strand of RNA-DNA heteroduplexes in a partially processive 3'- to 5'-endonucleasic mode. Neo-synthesized pregenomic RNA (pgRNA) are encapsidated together with the P protein, and reverse-transcribed inside the nucleocapsid. Initiation of reverse-transcription occurs first by binding the epsilon loop on the pgRNA genome, and is initiated by protein priming, thereby the 5'-end of (-)DNA is covalently linked to P protein. Partial (+)DNA is synthesized from the (-)DNA template and generates the relaxed circular DNA (RC-DNA) genome. After budding and infection, the RC-DNA migrates in the nucleus, and is converted into a plasmid-like covalently closed circular DNA (cccDNA). The activity of P protein does not seem to be necessary for cccDNA generation, and is presumably released from (+)DNA by host nuclear DNA repair machinery. This chain is Protein P, found in Marmota monax (Woodchuck).